We begin with the raw amino-acid sequence, 221 residues long: Nuclear phosphoprotein UL3 homolog (221 aa).

This sequence belongs to the alphaherpesvirinae HHV-1 UL3 family. Post-translationally, phosphorylated.

It is found in the host nucleus. This is Nuclear phosphoprotein UL3 homolog from Varicella-zoster virus (strain Oka vaccine) (HHV-3).